Consider the following 521-residue polypeptide: Phosphoethanolamine transferase EptA (521 aa).

Transmembrane regions (helical) follow at residues 18-38 (AGLL…FVYV), 47-67 (FIAM…LALG), 79-99 (IVFS…KVFL), 118-138 (FLSV…GYVI), 150-170 (APFL…LANT), and 182-202 (FIGG…VSAL).

This sequence belongs to the phosphoethanolamine transferase family. EptA subfamily.

The protein localises to the cell inner membrane. It participates in bacterial outer membrane biogenesis; LPS lipid A biosynthesis. Probably catalyzes the addition of a phosphoethanolamine moiety to the dephosphorylated 1-position of the disaccharide backbone of lipid A. Lipid A that is 1-phosphorylated is not a substrate for this enzyme. The chain is Phosphoethanolamine transferase EptA from Helicobacter pylori (strain ATCC 700392 / 26695) (Campylobacter pylori).